The primary structure comprises 131 residues: Small ribosomal subunit protein bS6 (131 aa).

The tract at residues 98–131 (EASPMVKAKDERRERRDDFANETADDAEAGDSEE) is disordered. A compositionally biased stretch (basic and acidic residues) spans 104-116 (KAKDERRERRDDF). The span at 120 to 131 (TADDAEAGDSEE) shows a compositional bias: acidic residues.

It belongs to the bacterial ribosomal protein bS6 family.

In terms of biological role, binds together with bS18 to 16S ribosomal RNA. This is Small ribosomal subunit protein bS6 from Cronobacter sakazakii (strain ATCC BAA-894) (Enterobacter sakazakii).